The primary structure comprises 494 residues: MDGSSEKTTNKLVSILPNYRIGKTLGHGSFAKVKLALHVATGHKVAIKILNRSKIKNMGIEIKVQREIKILRFLMHPHIIRQYEVIETPNDIYVVMEYVKSGELFDYIVEKGKLQEDEARHLFQQIISGVEYCHRNMIVHRDLKPENVLLDSQCNIKIVDFGLSNVMHDGHFLKTSCGSPNYAAPEVISGKPYGPDVDIWSCGVILYALLCGTLPFDDENIPNVFEKIKRGMYTLPNHLSHFARDLIPRMLMVDPTMRISITEIRQHPWFNNHLPLYLSIPPLDTIDQAKKIEEEIIQNVVNIGFDRNHVVDSLANRIQNEATVAYHLILDNRNQNSVPNDPFQSKFKEISDGIFNSTLPVQNITSHVGHSFSALYGLKSNVKDDKTWTLGLQSQGSPYDIMTEIFKALQNLKICWKKIGLYNIKCRWVRSFAYYKNHTIEDECAIILPTVIKFEIQLYKVREGKYLLDILRIDGPQFIFFDLCVAFLRELGVL.

The region spanning 19–270 (YRIGKTLGHG…ITEIRQHPWF (252 aa)) is the Protein kinase domain. Residues 25 to 33 (LGHGSFAKV) and K48 each bind ATP. Residue D142 is the Proton acceptor of the active site. T175 is subject to Phosphothreonine. The interval 289–386 (AKKIEEEIIQ…GLKSNVKDDK (98 aa)) is auto-inhibitory domain (AID). Residues 291–331 (KIEEEIIQNVVNIGFDRNHVVDSLANRIQNEATVAYHLILD) enclose the UBA domain. The interval 293–494 (EEEIIQNVVN…VAFLRELGVL (202 aa)) is regulatory domain (RD). A PPI region spans residues 387–494 (TWTLGLQSQG…VAFLRELGVL (108 aa)). The KA1 domain occupies 445–493 (AIILPTVIKFEIQLYKVREGKYLLDILRIDGPQFIFFDLCVAFLRELGV).

The protein belongs to the protein kinase superfamily. CAMK Ser/Thr protein kinase family. SNF1 subfamily. As to quaternary structure, subunit of a probable heterotrimeric complex consisting of an alpha catalytic subunit, and a beta (KINB) and a gamma (KING or SNF4) non-catalytic regulatory subunits. Autophosphorylated. In terms of tissue distribution, expressed at very low levels.

It carries out the reaction L-seryl-[protein] + ATP = O-phospho-L-seryl-[protein] + ADP + H(+). The catalysed reaction is L-threonyl-[protein] + ATP = O-phospho-L-threonyl-[protein] + ADP + H(+). Its activity is regulated as follows. Activated by phosphorylation at Thr-175. Functionally, catalytic subunit of the probable trimeric SNF1-related protein kinase (SnRK) complex, a central regulator of cellular energy homeostasis, which, in response to seemingly unrelated darkness, sugar and stress conditions, activates energy-producing pathways and inhibits energy-consuming processes. May also be involved in the regulation of fatty acid synthesis by phosphorylation of acetyl-CoA carboxylase and in assimilation of nitrogen by phosphorylating nitrate reductase. This is SNF1-related protein kinase catalytic subunit alpha KIN12 from Arabidopsis thaliana (Mouse-ear cress).